Reading from the N-terminus, the 212-residue chain is Glutathione S-transferase (212 aa).

One can recognise a GST N-terminal domain in the interval 1 to 82 (MGMKLHGPAM…YIAHTYADKG (82 aa)). Glutathione contacts are provided by residues S11, 12–13 (PA), 40–41 (HK), 53–54 (QV), and 66–67 (ES). A GST C-terminal domain is found at 89–212 (DPKKMAIMSV…AWSKAIEYKQ (124 aa)).

It belongs to the GST superfamily. Phi family.

It catalyses the reaction RX + glutathione = an S-substituted glutathione + a halide anion + H(+). In terms of biological role, conjugation of reduced glutathione to a wide number of exogenous and endogenous hydrophobic electrophiles. This Hyoscyamus muticus (Egyptian henbane) protein is Glutathione S-transferase.